The sequence spans 194 residues: uncharacterized protein (194 aa).

A disordered region spans residues 45–138 (QLLGVPEQHR…AGPPRGDWGV (94 aa)). A phosphoserine mark is found at Ser-69 and Ser-76. Residues 97–106 (PPLPPPPVLP) show a composition bias toward pro residues. Residues 107–116 (GPGEELPGAR) are compositionally biased toward low complexity. Residues 117 to 128 (LPGGGGDDGAGR) show a composition bias toward gly residues.

This is an uncharacterized protein from Homo sapiens (Human).